The chain runs to 70 residues: Large ribosomal subunit protein bL31 (70 aa).

Residues C16, C18, C37, and C40 each contribute to the Zn(2+) site.

It belongs to the bacterial ribosomal protein bL31 family. Type A subfamily. As to quaternary structure, part of the 50S ribosomal subunit. The cofactor is Zn(2+).

Its function is as follows. Binds the 23S rRNA. The sequence is that of Large ribosomal subunit protein bL31 from Actinobacillus pleuropneumoniae serotype 5b (strain L20).